A 216-amino-acid chain; its full sequence is MIF4G domain-containing protein A (216 aa).

Residues 2–199 (DSAWTALDME…LEILEFRASG (198 aa)) enclose the MIF4G domain.

The protein belongs to the MIF4GD family. As to quaternary structure, interacts with eif4g1, eif4g2 and slbp; probably tethered by SLBP to the 3'-end of mRNAs ending with the histone stem-loop, it also interacts with eif4g1 which is bound to their 5'-end.

Its subcellular location is the cytoplasm. The protein resides in the nucleus. Its function is as follows. Functions in replication-dependent translation of histone mRNAs which differ from other eukaryotic mRNAs in that they do not end with a poly-A tail but a stem-loop. May participate in circularizing those mRNAs specifically enhancing their translation. In Danio rerio (Zebrafish), this protein is MIF4G domain-containing protein A (mif4gda).